Consider the following 90-residue polypeptide: Succinate dehydrogenase subunit 7, mitochondrial (90 aa).

Residues 1-41 constitute a mitochondrion transit peptide; sequence MAQPAFLSALRSRLRSPQPQAPALPHLQPPRRGFHVELGAR.

Component of complex II composed of eight subunits in plants: four classical SDH subunits SDH1, SDH2, SDH3 and SDH4 (a flavoprotein (FP), an iron-sulfur protein (IP), and a cytochrome b composed of a large and a small subunit.), as well as four subunits unknown in mitochondria from bacteria and heterotrophic eukaryotes.

It is found in the mitochondrion inner membrane. It participates in carbohydrate metabolism; tricarboxylic acid cycle. The sequence is that of Succinate dehydrogenase subunit 7, mitochondrial from Oryza sativa subsp. japonica (Rice).